The primary structure comprises 974 residues: Alpha-1,4 glucan phosphorylase L-2 isozyme, chloroplastic/amyloplastic (974 aa).

Residues 1–81 constitute a chloroplast transit peptide; sequence MATFAVSGLN…LDVFQPDSTS (81 aa). The disordered stretch occupies residues 509 to 551; it reads ADVEKAADEEQEEEGKDDSKDEETEAVKAETTNEEEETEVKKV. Residues 517–532 are compositionally biased toward acidic residues; sequence EEQEEEGKDDSKDEET. N6-(pyridoxal phosphate)lysine is present on K820.

It belongs to the glycogen phosphorylase family. Pyridoxal 5'-phosphate is required as a cofactor. In terms of tissue distribution, leaves.

The protein resides in the plastid. The protein localises to the chloroplast. It localises to the amyloplast. It carries out the reaction [(1-&gt;4)-alpha-D-glucosyl](n) + phosphate = [(1-&gt;4)-alpha-D-glucosyl](n-1) + alpha-D-glucose 1-phosphate. Its function is as follows. Phosphorylase is an important allosteric enzyme in carbohydrate metabolism. Enzymes from different sources differ in their regulatory mechanisms and in their natural substrates. However, all known phosphorylases share catalytic and structural properties. This Solanum tuberosum (Potato) protein is Alpha-1,4 glucan phosphorylase L-2 isozyme, chloroplastic/amyloplastic (STP-1).